The primary structure comprises 330 residues: uncharacterized protein (330 aa).

Histidine 257 is an active-site residue.

This sequence belongs to the IUNH family.

This is an uncharacterized protein from Schizosaccharomyces pombe (strain 972 / ATCC 24843) (Fission yeast).